The primary structure comprises 201 residues: ATP-dependent Clp protease proteolytic subunit (201 aa).

Serine 103 acts as the Nucleophile in catalysis. Histidine 128 is an active-site residue.

Belongs to the peptidase S14 family. As to quaternary structure, fourteen ClpP subunits assemble into 2 heptameric rings which stack back to back to give a disk-like structure with a central cavity, resembling the structure of eukaryotic proteasomes.

It localises to the cytoplasm. It carries out the reaction Hydrolysis of proteins to small peptides in the presence of ATP and magnesium. alpha-casein is the usual test substrate. In the absence of ATP, only oligopeptides shorter than five residues are hydrolyzed (such as succinyl-Leu-Tyr-|-NHMec, and Leu-Tyr-Leu-|-Tyr-Trp, in which cleavage of the -Tyr-|-Leu- and -Tyr-|-Trp bonds also occurs).. Cleaves peptides in various proteins in a process that requires ATP hydrolysis. Has a chymotrypsin-like activity. Plays a major role in the degradation of misfolded proteins. This is ATP-dependent Clp protease proteolytic subunit from Bordetella avium (strain 197N).